We begin with the raw amino-acid sequence, 87 residues long: DNA-directed RNA polymerase subunit omega (87 aa).

Belongs to the RNA polymerase subunit omega family. The RNAP catalytic core consists of 2 alpha, 1 beta, 1 beta' and 1 omega subunit. When a sigma factor is associated with the core the holoenzyme is formed, which can initiate transcription.

The enzyme catalyses RNA(n) + a ribonucleoside 5'-triphosphate = RNA(n+1) + diphosphate. Functionally, promotes RNA polymerase assembly. Latches the N- and C-terminal regions of the beta' subunit thereby facilitating its interaction with the beta and alpha subunits. The protein is DNA-directed RNA polymerase subunit omega of Ectopseudomonas mendocina (strain ymp) (Pseudomonas mendocina).